A 1111-amino-acid polypeptide reads, in one-letter code: Receptor-type guanylate cyclase gcy-7 (1111 aa).

The first 24 residues, 1 to 24 (MKPFYSMSLVLFLVITLLPKPMFP), serve as a signal peptide directing secretion. The Extracellular portion of the chain corresponds to 25–488 (QVATGTTGNV…CPKSFVDEYL (464 aa)). Residues asparagine 80, asparagine 300, asparagine 326, asparagine 353, asparagine 389, asparagine 407, asparagine 430, and asparagine 441 are each glycosylated (N-linked (GlcNAc...) asparagine). Residues 489–509 (IWVIVAIVVLFLAITAAACGI) traverse the membrane as a helical segment. At 510-1111 (YFSIQARRQE…TLKSDEQLSD (602 aa)) the chain is on the cytoplasmic side. In terms of domain architecture, Protein kinase spans 536-838 (QINSKQKGKG…NDNLMDHVFN (303 aa)). Residues 542-550 (KGKGEHSVR) and lysine 568 each bind ATP. The Guanylate cyclase domain occupies 896–1026 (TIFFSDVVQF…DAVNTASRME (131 aa)).

It belongs to the adenylyl cyclase class-4/guanylyl cyclase family. In terms of tissue distribution, expressed asymmetrically in ASE left (ASEL) sensory neuron. Expressed in excretory canal cell.

Its subcellular location is the cell membrane. It carries out the reaction GTP = 3',5'-cyclic GMP + diphosphate. In terms of biological role, guanylate cyclase involved in the production of the second messenger cGMP. Unlike other guanylate cyclases expressed in ASE neurons, may not play a role in chemotaxis responses toward salt ions in ASEL (ASE left) sensory neurons. This chain is Receptor-type guanylate cyclase gcy-7, found in Caenorhabditis elegans.